Consider the following 403-residue polypeptide: D-mannonate dehydratase Caul1427 (403 aa).

Substrate is bound by residues asparagine 38 and histidine 123. Tyrosine 160 functions as the Proton donor/acceptor in the catalytic mechanism. Mg(2+) is bound at residue aspartate 211. The Proton donor/acceptor role is filled by histidine 213. Mg(2+) contacts are provided by glutamate 237 and glutamate 263. Residues glutamate 263, arginine 284, histidine 313, aspartate 317, and glutamate 340 each contribute to the substrate site.

The protein belongs to the mandelate racemase/muconate lactonizing enzyme family. GalD subfamily. Mg(2+) serves as cofactor.

It carries out the reaction D-mannonate = 2-dehydro-3-deoxy-D-gluconate + H2O. Its pathway is carbohydrate metabolism; pentose and glucuronate interconversion. Functionally, catalyzes the dehydration of D-mannonate. Has no detectable activity with a panel of 70 other acid sugars (in vitro). The sequence is that of D-mannonate dehydratase Caul1427 from Caulobacter sp. (strain K31).